Reading from the N-terminus, the 288-residue chain is Bifunctional protein FolD (288 aa).

Residues 164–166 (GRS) and Val230 contribute to the NADP(+) site.

This sequence belongs to the tetrahydrofolate dehydrogenase/cyclohydrolase family. As to quaternary structure, homodimer.

It carries out the reaction (6R)-5,10-methylene-5,6,7,8-tetrahydrofolate + NADP(+) = (6R)-5,10-methenyltetrahydrofolate + NADPH. The catalysed reaction is (6R)-5,10-methenyltetrahydrofolate + H2O = (6R)-10-formyltetrahydrofolate + H(+). It functions in the pathway one-carbon metabolism; tetrahydrofolate interconversion. Its function is as follows. Catalyzes the oxidation of 5,10-methylenetetrahydrofolate to 5,10-methenyltetrahydrofolate and then the hydrolysis of 5,10-methenyltetrahydrofolate to 10-formyltetrahydrofolate. In Thermomicrobium roseum (strain ATCC 27502 / DSM 5159 / P-2), this protein is Bifunctional protein FolD.